The primary structure comprises 281 residues: MANGAEDVVFCRGTGQSDDSDIWDDTALIKAYDKAVASFKNALKGEDGATPQENDNPGKKRKNNKKNKSRKRCNAAPDKEWQVGDSCYAFWSEDGNLYTATITSVDQEKGTCVVFYTDYGNEEEQNLSDLLTEPPDMDEDALKTANVKETESSTEESDRSFTPQKSGHAKHKSKSNFPMGPPSWFPSFPPGPPPPPPHFKKMDGRRGEGPGPSFPGWPPMIPLGPPMIPPPPPMSPDFGEDDEALGSMLISWYMSGYHTGYYMGLRQGRKEAAASKKSHRK.

2 disordered regions span residues 1–20 (MANGAEDVVFCRGTGQSDDS) and 42–77 (ALKGEDGATPQENDNPGKKRKNNKKNKSRKRCNAAP). A Phosphothreonine modification is found at Thr-14. A phosphoserine mark is found at Ser-17 and Ser-20. Residues 59–73 (KKRKNNKKNKSRKRC) are compositionally biased toward basic residues. In terms of domain architecture, Tudor spans 80 to 140 (EWQVGDSCYA…LTEPPDMDED (61 aa)). Residues 145–159 (ANVKETESSTEESDR) show a composition bias toward basic and acidic residues. The disordered stretch occupies residues 145 to 242 (ANVKETESST…PMSPDFGEDD (98 aa)). Pro residues-rich tracts occupy residues 179–197 (MGPPSWFPSFPPGPPPPPP) and 212–235 (PSFPGWPPMIPLGPPMIPPPPPMS). The segment at 225–252 (PPMIPPPPPMSPDFGEDDEALGSMLISW) is P2 (binding site for SNRPB). The tract at residues 264–279 (GLRQGRKEAAASKKSH) is required for interaction with SYNCRIP.

Belongs to the SMN family. In terms of assembly, homodimer. Component of an import snRNP complex composed of kpnb1, rnut1, smn1 and znf259. Part of the core SMN complex that contains smn1, gemin2/sip1, ddx20/gemin3, gemin4, gemin5, gemin6, gemin7, gemin8 and strap/unrip. Interacts with ddx20, fbl, nola1, rnut1, syncrip and with several spliceosomal snRNP core Sm proteins, including snrpb, snrpd1, snrpd2, snrpd3, snrpe and ilf3. Interacts with elavl4.

It is found in the nucleus. The protein resides in the gem. Its subcellular location is the cajal body. The protein localises to the cytoplasm. It localises to the cytoplasmic granule. It is found in the perikaryon. The protein resides in the cell projection. Its subcellular location is the neuron projection. The protein localises to the myofibril. It localises to the sarcomere. It is found in the z line. Functionally, the SMN complex plays an essential role in spliceosomal snRNP assembly in the cytoplasm and is required for pre-mRNA splicing in the nucleus. It may also play a role in the metabolism of snoRNPs. Required in motor neurons and proprioceptive neurons to ensure correct U12 intron splicing and proper levels of tmem41b mRNA. Required for the maturation of motor neuron axonal branches and dendrites. This chain is Survival motor neuron protein 1 (smn1), found in Danio rerio (Zebrafish).